A 61-amino-acid chain; its full sequence is Probable tautomerase lmo2564 (61 aa).

The Proton acceptor; via imino nitrogen role is filled by proline 2.

The protein belongs to the 4-oxalocrotonate tautomerase family.

This is Probable tautomerase lmo2564 from Listeria monocytogenes serovar 1/2a (strain ATCC BAA-679 / EGD-e).